The sequence spans 234 residues: Biosynthetic peptidoglycan transglycosylase (234 aa).

The helical transmembrane segment at 8–28 threads the bilayer; the sequence is VIGCFAAGVVALNLYFFAAIA.

It belongs to the glycosyltransferase 51 family.

Its subcellular location is the cell inner membrane. The enzyme catalyses [GlcNAc-(1-&gt;4)-Mur2Ac(oyl-L-Ala-gamma-D-Glu-L-Lys-D-Ala-D-Ala)](n)-di-trans,octa-cis-undecaprenyl diphosphate + beta-D-GlcNAc-(1-&gt;4)-Mur2Ac(oyl-L-Ala-gamma-D-Glu-L-Lys-D-Ala-D-Ala)-di-trans,octa-cis-undecaprenyl diphosphate = [GlcNAc-(1-&gt;4)-Mur2Ac(oyl-L-Ala-gamma-D-Glu-L-Lys-D-Ala-D-Ala)](n+1)-di-trans,octa-cis-undecaprenyl diphosphate + di-trans,octa-cis-undecaprenyl diphosphate + H(+). Its pathway is cell wall biogenesis; peptidoglycan biosynthesis. Peptidoglycan polymerase that catalyzes glycan chain elongation from lipid-linked precursors. The sequence is that of Biosynthetic peptidoglycan transglycosylase from Ralstonia nicotianae (strain ATCC BAA-1114 / GMI1000) (Ralstonia solanacearum).